We begin with the raw amino-acid sequence, 545 residues long: Chaperonin GroEL (545 aa).

ATP contacts are provided by residues 30–33 (TLGP), K51, 87–91 (DGTTT), G415, and D495.

It belongs to the chaperonin (HSP60) family. Forms a cylinder of 14 subunits composed of two heptameric rings stacked back-to-back. Interacts with the co-chaperonin GroES.

The protein localises to the cytoplasm. The enzyme catalyses ATP + H2O + a folded polypeptide = ADP + phosphate + an unfolded polypeptide.. Together with its co-chaperonin GroES, plays an essential role in assisting protein folding. The GroEL-GroES system forms a nano-cage that allows encapsulation of the non-native substrate proteins and provides a physical environment optimized to promote and accelerate protein folding. This chain is Chaperonin GroEL, found in Shewanella amazonensis (strain ATCC BAA-1098 / SB2B).